Here is a 217-residue protein sequence, read N- to C-terminus: Imidazole glycerol phosphate synthase subunit HisH (217 aa).

The region spanning 6 to 214 (QIAVVDYDMG…VTQVAAAQLQ (209 aa)) is the Glutamine amidotransferase type-1 domain. The active-site Nucleophile is the C84. Residues H189 and E191 contribute to the active site.

As to quaternary structure, heterodimer of HisH and HisF.

The protein localises to the cytoplasm. The catalysed reaction is 5-[(5-phospho-1-deoxy-D-ribulos-1-ylimino)methylamino]-1-(5-phospho-beta-D-ribosyl)imidazole-4-carboxamide + L-glutamine = D-erythro-1-(imidazol-4-yl)glycerol 3-phosphate + 5-amino-1-(5-phospho-beta-D-ribosyl)imidazole-4-carboxamide + L-glutamate + H(+). It catalyses the reaction L-glutamine + H2O = L-glutamate + NH4(+). The protein operates within amino-acid biosynthesis; L-histidine biosynthesis; L-histidine from 5-phospho-alpha-D-ribose 1-diphosphate: step 5/9. Functionally, IGPS catalyzes the conversion of PRFAR and glutamine to IGP, AICAR and glutamate. The HisH subunit catalyzes the hydrolysis of glutamine to glutamate and ammonia as part of the synthesis of IGP and AICAR. The resulting ammonia molecule is channeled to the active site of HisF. This is Imidazole glycerol phosphate synthase subunit HisH from Synechococcus sp. (strain ATCC 27144 / PCC 6301 / SAUG 1402/1) (Anacystis nidulans).